The sequence spans 357 residues: Phosphoserine aminotransferase (357 aa).

R41 provides a ligand contact to L-glutamate. Residues 76–77, W102, T152, D171, and Q194 each bind pyridoxal 5'-phosphate; that span reads GT. K195 bears the N6-(pyridoxal phosphate)lysine mark. A pyridoxal 5'-phosphate-binding site is contributed by 235–236; the sequence is NT.

The protein belongs to the class-V pyridoxal-phosphate-dependent aminotransferase family. SerC subfamily. Homodimer. It depends on pyridoxal 5'-phosphate as a cofactor.

The protein resides in the cytoplasm. The catalysed reaction is O-phospho-L-serine + 2-oxoglutarate = 3-phosphooxypyruvate + L-glutamate. It carries out the reaction 4-(phosphooxy)-L-threonine + 2-oxoglutarate = (R)-3-hydroxy-2-oxo-4-phosphooxybutanoate + L-glutamate. Its pathway is amino-acid biosynthesis; L-serine biosynthesis; L-serine from 3-phospho-D-glycerate: step 2/3. Its function is as follows. Catalyzes the reversible conversion of 3-phosphohydroxypyruvate to phosphoserine and of 3-hydroxy-2-oxo-4-phosphonooxybutanoate to phosphohydroxythreonine. This is Phosphoserine aminotransferase from Limosilactobacillus fermentum (strain NBRC 3956 / LMG 18251) (Lactobacillus fermentum).